The chain runs to 1374 residues: Probable multidrug resistance-associated protein lethal(2)03659 (1374 aa).

The disordered stretch occupies residues 1 to 40 (MDKQPVLEPTFDSVSERENTSIEESSLLENNGFDHRNKDE). The next 6 helical transmembrane spans lie at 159–179 (LLRVFGWQLGFPGLAIFVVEL), 205–225 (AGFYYAVAQIVISALTVMILT), 282–302 (YTVHYLWVGPLQVLVITYLMY), 305–325 (IGISAVFGVLFMLLFMPIQMY), 404–424 (IFLSLVGYVILGKVFTPEIAF), and 426–446 (ITAYYNVLLAAMSIYVPSAII). In terms of domain architecture, ABC transmembrane type-1 1 spans 168-449 (GFPGLAIFVV…YVPSAIIQTA (282 aa)). Residues 466–492 (ELGSSDKSEGPSKDTVPGNPPSNNNEA) form a disordered region. The region spanning 499–722 (ISIRDLKAKW…GLITGLGSLS (224 aa)) is the ABC transporter 1 domain. Position 534-541 (534-541 (GLTGSGKS)) interacts with ATP. Asparagine 561 carries an N-linked (GlcNAc...) asparagine glycan. Residues 723–766 (KTDKAKTEEQEPLNLNSPDNKNEVTPIKENSEQTVGGSSSGKEH) are disordered. The next 5 helical transmembrane spans lie at 787 to 807 (GGGLVAFLVMLSSSVLAQVAV), 845 to 865 (LIIILSVIMNLSSSFLLFNIA), 913 to 933 (VVLVDVMQIALWLAGIIIVIA), 938 to 958 (LLLVPTLMLSVIFYHLRNLYL), and 1025 to 1045 (YCMNCICVIYISIITLSFFAF). An ABC transmembrane type-1 2 domain is found at 793-1079 (FLVMLSSSVL…GVRQTAELEN (287 aa)). In terms of domain architecture, ABC transporter 2 spans 1119-1352 (FKELNLRYTP…SDSKVFHNLV (234 aa)). 1153–1160 (GRTGAGKS) provides a ligand contact to ATP. Asparagine 1254 and asparagine 1353 each carry an N-linked (GlcNAc...) asparagine glycan.

The protein belongs to the ABC transporter superfamily. ABCC family. Conjugate transporter (TC 3.A.1.208) subfamily. Uniform expression in embryos.

Its subcellular location is the membrane. Functionally, vital for development. This Drosophila melanogaster (Fruit fly) protein is Probable multidrug resistance-associated protein lethal(2)03659 (l(2)03659).